Here is a 1007-residue protein sequence, read N- to C-terminus: Probable beta-galactosidase A (1007 aa).

Positions 1-18 are cleaved as a signal peptide; the sequence is MRLLPVWTAALLAAQAAG. Substrate is bound by residues Tyr96, Asn140, Ala141, and Glu142. Asn156 carries N-linked (GlcNAc...) asparagine glycosylation. Residue Asn199 participates in substrate binding. Glu200 (proton donor) is an active-site residue. A disulfide bridge links Cys205 with Cys206. Tyr260 is a binding site for substrate. A disulfide bridge connects residues Cys266 and Cys315. The Nucleophile role is filled by Glu298. Substrate is bound at residue Tyr364. Asn405, Asn422, Asn621, Asn740, Asn775, and Asn914 each carry an N-linked (GlcNAc...) asparagine glycan.

This sequence belongs to the glycosyl hydrolase 35 family.

It localises to the secreted. It catalyses the reaction Hydrolysis of terminal non-reducing beta-D-galactose residues in beta-D-galactosides.. Cleaves beta-linked terminal galactosyl residues from gangliosides, glycoproteins, and glycosaminoglycans. The polypeptide is Probable beta-galactosidase A (lacA) (Emericella nidulans (strain FGSC A4 / ATCC 38163 / CBS 112.46 / NRRL 194 / M139) (Aspergillus nidulans)).